We begin with the raw amino-acid sequence, 600 residues long: UvrABC system protein C (600 aa).

A GIY-YIG domain is found at 16 to 94 (EKPGCYQYFD…IKEYQPRYNV (79 aa)). The region spanning 208–243 (HRLVRMYRDRMQAYSEELRFEEAQICKERIELLERY) is the UVR domain.

The protein belongs to the UvrC family. In terms of assembly, interacts with UvrB in an incision complex.

It is found in the cytoplasm. In terms of biological role, the UvrABC repair system catalyzes the recognition and processing of DNA lesions. UvrC both incises the 5' and 3' sides of the lesion. The N-terminal half is responsible for the 3' incision and the C-terminal half is responsible for the 5' incision. The chain is UvrABC system protein C from Porphyromonas gingivalis (strain ATCC 33277 / DSM 20709 / CIP 103683 / JCM 12257 / NCTC 11834 / 2561).